The chain runs to 376 residues: uncharacterized protein (376 aa).

Residues 19–39 (FVLISLILLLNLGLLLGIQIY) form a helical membrane-spanning segment.

To S.pombe SpAC5H10.12c.

Its subcellular location is the cytoplasm. It localises to the nucleus. The protein resides in the membrane. This is an uncharacterized protein from Schizosaccharomyces pombe (strain 972 / ATCC 24843) (Fission yeast).